The following is a 266-amino-acid chain: 4-hydroxy-tetrahydrodipicolinate reductase (266 aa).

NAD(+) is bound at residue 10 to 15; the sequence is GPRGRM. Position 38 (lysine 38) interacts with NADP(+). Residues 99 to 101 and 125 to 128 each bind NAD(+); these read GTT and APNF. Catalysis depends on histidine 155, which acts as the Proton donor/acceptor. Histidine 156 contacts (S)-2,3,4,5-tetrahydrodipicolinate. Lysine 159 serves as the catalytic Proton donor. 165 to 166 lines the (S)-2,3,4,5-tetrahydrodipicolinate pocket; it reads GT.

Belongs to the DapB family.

Its subcellular location is the cytoplasm. It carries out the reaction (S)-2,3,4,5-tetrahydrodipicolinate + NAD(+) + H2O = (2S,4S)-4-hydroxy-2,3,4,5-tetrahydrodipicolinate + NADH + H(+). The catalysed reaction is (S)-2,3,4,5-tetrahydrodipicolinate + NADP(+) + H2O = (2S,4S)-4-hydroxy-2,3,4,5-tetrahydrodipicolinate + NADPH + H(+). Its pathway is amino-acid biosynthesis; L-lysine biosynthesis via DAP pathway; (S)-tetrahydrodipicolinate from L-aspartate: step 4/4. Its function is as follows. Catalyzes the conversion of 4-hydroxy-tetrahydrodipicolinate (HTPA) to tetrahydrodipicolinate. This Bacillus cereus (strain Q1) protein is 4-hydroxy-tetrahydrodipicolinate reductase.